Reading from the N-terminus, the 156-residue chain is Small ribosomal subunit protein uS7 (156 aa).

The protein belongs to the universal ribosomal protein uS7 family. Part of the 30S ribosomal subunit. Contacts proteins S9 and S11.

In terms of biological role, one of the primary rRNA binding proteins, it binds directly to 16S rRNA where it nucleates assembly of the head domain of the 30S subunit. Is located at the subunit interface close to the decoding center, probably blocks exit of the E-site tRNA. This Rhodospirillum centenum (strain ATCC 51521 / SW) protein is Small ribosomal subunit protein uS7.